Reading from the N-terminus, the 378-residue chain is MMLVRSVFRSQLRPSVSGGLQSASCYSSLSAASAEAERTIREGPRNDWSRDEIKSVYDSPLLDLLFHGAQVHRHVHNFREVQQCTLLSIKTGGCSEDCSYCPQSSRYSTGVKAQRLMSKDAVIDAAKKAKEAGSTRFCMGAAWRDTIGRKTNFSQILEYIKEIRGMGMEVCCTLGMIEKQQALELKKAGLTAYNHNLDTSREYYPNVITTRSYDDRLETLSHVRDAGINVCSGGIIGLGEAEEDRIGLLHTLATLPSHPESVPINALLAVKGTPLEDQKPVEIWEMIRMIGTARIVMPKAMVRLSAGRVRFSMSEQALCFLAGANSIFTGEKLLTTPNNDFDADQLMFKTLGLIPKPPSFSEDDSESENCEKVASASH.

Residues methionine 1–tyrosine 26 constitute a mitochondrion transit peptide. Residues arginine 79–arginine 308 enclose the Radical SAM core domain. [4Fe-4S] cluster is bound by residues cysteine 94, cysteine 98, and cysteine 101. Cysteine 138, cysteine 171, cysteine 231, and arginine 303 together coordinate [2Fe-2S] cluster. The interval proline 357–histidine 378 is disordered.

Belongs to the radical SAM superfamily. Biotin synthase family. [4Fe-4S] cluster serves as cofactor. The cofactor is [2Fe-2S] cluster.

It is found in the mitochondrion. It catalyses the reaction (4R,5S)-dethiobiotin + (sulfur carrier)-SH + 2 reduced [2Fe-2S]-[ferredoxin] + 2 S-adenosyl-L-methionine = (sulfur carrier)-H + biotin + 2 5'-deoxyadenosine + 2 L-methionine + 2 oxidized [2Fe-2S]-[ferredoxin]. It participates in cofactor biosynthesis; biotin biosynthesis; biotin from 7,8-diaminononanoate: step 2/2. This Arabidopsis thaliana (Mouse-ear cress) protein is Biotin synthase, mitochondrial (BIO2).